The following is a 423-amino-acid chain: Gamma-glutamyl phosphate reductase (423 aa).

Belongs to the gamma-glutamyl phosphate reductase family.

The protein localises to the cytoplasm. The catalysed reaction is L-glutamate 5-semialdehyde + phosphate + NADP(+) = L-glutamyl 5-phosphate + NADPH + H(+). It participates in amino-acid biosynthesis; L-proline biosynthesis; L-glutamate 5-semialdehyde from L-glutamate: step 2/2. Functionally, catalyzes the NADPH-dependent reduction of L-glutamate 5-phosphate into L-glutamate 5-semialdehyde and phosphate. The product spontaneously undergoes cyclization to form 1-pyrroline-5-carboxylate. The polypeptide is Gamma-glutamyl phosphate reductase (Paraburkholderia xenovorans (strain LB400)).